Here is a 105-residue protein sequence, read N- to C-terminus: NADH-quinone oxidoreductase subunit K (105 aa).

Helical transmembrane passes span 8–28 (LAAYLILGAMLFSIGVVGVFL), 34–54 (IILLMAIELLLLAVNINLVAF), and 65–85 (VFVFFILTVAAAEAAIGLAIL).

It belongs to the complex I subunit 4L family. In terms of assembly, NDH-1 is composed of 14 different subunits. Subunits NuoA, H, J, K, L, M, N constitute the membrane sector of the complex.

It is found in the cell inner membrane. It catalyses the reaction a quinone + NADH + 5 H(+)(in) = a quinol + NAD(+) + 4 H(+)(out). In terms of biological role, NDH-1 shuttles electrons from NADH, via FMN and iron-sulfur (Fe-S) centers, to quinones in the respiratory chain. The immediate electron acceptor for the enzyme in this species is believed to be ubiquinone. Couples the redox reaction to proton translocation (for every two electrons transferred, four hydrogen ions are translocated across the cytoplasmic membrane), and thus conserves the redox energy in a proton gradient. The chain is NADH-quinone oxidoreductase subunit K from Acidithiobacillus ferrooxidans (strain ATCC 23270 / DSM 14882 / CIP 104768 / NCIMB 8455) (Ferrobacillus ferrooxidans (strain ATCC 23270)).